The chain runs to 453 residues: Tol-Pal system protein TolB (453 aa).

The signal sequence occupies residues 1 to 34 (MYLIIKKTHKLPHWLQKVSLSIMLIIFLWKPALL).

This sequence belongs to the TolB family. As to quaternary structure, the Tol-Pal system is composed of five core proteins: the inner membrane proteins TolA, TolQ and TolR, the periplasmic protein TolB and the outer membrane protein Pal. They form a network linking the inner and outer membranes and the peptidoglycan layer.

The protein resides in the periplasm. Its function is as follows. Part of the Tol-Pal system, which plays a role in outer membrane invagination during cell division and is important for maintaining outer membrane integrity. TolB occupies a key intermediary position in the Tol-Pal system because it communicates directly with both membrane-embedded components, Pal in the outer membrane and TolA in the inner membrane. The protein is Tol-Pal system protein TolB of Blochmanniella pennsylvanica (strain BPEN).